A 227-amino-acid polypeptide reads, in one-letter code: Uracil-DNA glycosylase (227 aa).

D64 functions as the Proton acceptor in the catalytic mechanism.

Belongs to the uracil-DNA glycosylase (UDG) superfamily. UNG family.

The protein localises to the cytoplasm. The enzyme catalyses Hydrolyzes single-stranded DNA or mismatched double-stranded DNA and polynucleotides, releasing free uracil.. Its function is as follows. Excises uracil residues from the DNA which can arise as a result of misincorporation of dUMP residues by DNA polymerase or due to deamination of cytosine. In Serratia proteamaculans (strain 568), this protein is Uracil-DNA glycosylase.